Here is a 394-residue protein sequence, read N- to C-terminus: MASQDCHMLLSFFISTFLITVVTSQTRCRNFKSIISFGDSITDTGNLLGLSSPNDLPESAFPPYGETFFHHPSGRFSDGRLIIDFIAEFLGIPHVPPFYGSKNGNFEKGVNFAVGGATALECSVLEEKGTHCSQSNISLGNQLKSFKESLPYLCGSSSPDCRDMIENAFILIGEIGGNDYNFPLFDRKNIEEVKELVPLVITTISSAISELVDMGARTFLVPGNFPLGCSVAYLTLYETPNKEEYNPLTGCLTWLNDFSVYHNEQLQAELKRLRNLYPHVNIIYGDYYNTLLRLMQEPSKFGLMDRPLPACCGLGGPYNFTFSIKCGSKGVEYCSDPSKYVNWDGIHMTEAAYKWISEGVLTGPYAIPPFNWSCLDSKIKNNESLHTQYSLMNS.

The N-terminal stretch at methionine 1–serine 24 is a signal peptide. Serine 40 functions as the Nucleophile in the catalytic mechanism. N-linked (GlcNAc...) asparagine glycosylation is found at asparagine 136 and asparagine 319. Residues aspartate 344 and histidine 347 contribute to the active site. N-linked (GlcNAc...) asparagine glycosylation is found at asparagine 371 and asparagine 382.

This sequence belongs to the 'GDSL' lipolytic enzyme family.

It localises to the secreted. The polypeptide is GDSL esterase/lipase At2g27360 (Arabidopsis thaliana (Mouse-ear cress)).